A 455-amino-acid chain; its full sequence is Deoxyribodipyrimidine photo-lyase (455 aa).

One can recognise a Photolyase/cryptochrome alpha/beta domain in the interval 2–131 (SVAVVLFTSD…ELHVHDAVVT (130 aa)). FAD is bound by residues Tyr-219 and 231–235 (TSRLS). 2 interaction with DNA regions span residues 266 to 273 (QLAWRDFH) and 330 to 331 (NR). 361-363 (DGD) contributes to the FAD binding site. Residue Gln-392 participates in DNA binding.

Belongs to the DNA photolyase class-1 family. As to quaternary structure, monomer. FAD is required as a cofactor. Coenzyme F420-(gamma-Glu)n serves as cofactor.

The catalysed reaction is cyclobutadipyrimidine (in DNA) = 2 pyrimidine residues (in DNA).. Functionally, involved in repair of UV radiation-induced DNA damage. Catalyzes the light-dependent monomerization (300-600 nm) of cyclobutyl pyrimidine dimers (in cis-syn configuration), which are formed between adjacent bases on the same DNA strand upon exposure to ultraviolet radiation. This is Deoxyribodipyrimidine photo-lyase (phr) from Streptomyces griseus.